We begin with the raw amino-acid sequence, 277 residues long: Caspase-3 (277 aa).

Met1 is modified (N-acetylmethionine). 2 propeptides span residues 1–9 and 10–28; these read MENSENSVD and AKSI…KSMD. N6-acetyllysine is present on Lys11. Ser26 is subject to Phosphoserine. Catalysis depends on residues His121 and Cys163. Cys163 is subject to S-nitrosocysteine; in inhibited form.

The protein belongs to the peptidase C14A family. Heterotetramer that consists of two anti-parallel arranged heterodimers, each one formed by a 17 kDa (p17) and a 12 kDa (p12) subunit. Interacts with BIRC6/bruce. Cleavage by granzyme B, caspase-6, caspase-8 and caspase-10 generates the two active subunits. Additional processing of the propeptides is likely due to the autocatalytic activity of the activated protease. Active heterodimers between the small subunit of caspase-7 protease and the large subunit of caspase-3 also occur and vice versa. Post-translationally, S-nitrosylated on its catalytic site cysteine in unstimulated cell lines and denitrosylated upon activation of the Fas apoptotic pathway, associated with an increase in intracellular caspase activity. Fas therefore activates caspase-3 not only by inducing the cleavage of the caspase zymogen to its active subunits, but also by stimulating the denitrosylation of its active site thiol. In terms of processing, ubiquitinated by BIRC6; this activity is inhibited by DIABLO/SMAC.

It localises to the cytoplasm. The catalysed reaction is Strict requirement for an Asp residue at positions P1 and P4. It has a preferred cleavage sequence of Asp-Xaa-Xaa-Asp-|- with a hydrophobic amino-acid residue at P2 and a hydrophilic amino-acid residue at P3, although Val or Ala are also accepted at this position.. Its activity is regulated as follows. Inhibited by BIRC6; following inhibition of BIRC6-caspase binding by DIABLO/SMAC, BIRC6 is subjected to caspase cleavage, leading to an increase in active caspases. Functionally, involved in the activation cascade of caspases responsible for apoptosis execution. At the onset of apoptosis, it proteolytically cleaves poly(ADP-ribose) polymerase PARP1 at a '216-Asp-|-Gly-217' bond. Cleaves and activates sterol regulatory element binding proteins (SREBPs) between the basic helix-loop-helix leucine zipper domain and the membrane attachment domain. Cleaves and activates caspase-6, -7 and -9 (CASP6, CASP7 and CASP9, respectively). Cleaves and inactivates interleukin-18 (IL18). Triggers cell adhesion in sympathetic neurons through RET cleavage. Cleaves IL-1 beta between an Asp and an Ala, releasing the mature cytokine which is involved in a variety of inflammatory processes. Cleaves and inhibits serine/threonine-protein kinase AKT1 in response to oxidative stress. Acts as an inhibitor of type I interferon production during virus-induced apoptosis by mediating cleavage of antiviral proteins CGAS, IRF3 and MAVS, thereby preventing cytokine overproduction. Also involved in pyroptosis by mediating cleavage and activation of gasdermin-E (GSDME). Cleaves XRCC4 and phospholipid scramblase proteins XKR4, XKR8 and XKR9, leading to promote phosphatidylserine exposure on apoptotic cell surface. Cleaves BIRC6 following inhibition of BIRC6-caspase binding by DIABLO/SMAC. The polypeptide is Caspase-3 (CASP3) (Felis catus (Cat)).